A 464-amino-acid polypeptide reads, in one-letter code: NADH-quinone oxidoreductase subunit N 2 (464 aa).

14 helical membrane-spanning segments follow: residues 12 to 32 (VGII…LIGF), 33 to 53 (LGFL…LAGY), 62 to 82 (INAF…FVIF), 93 to 113 (TFVE…IMVS), 117 to 137 (LAVI…SVGM), 152 to 172 (LVLG…YIGA), 189 to 209 (FALA…AAPF), 227 to 247 (FIST…ASYI), 254 to 274 (FSYI…LVAY), 282 to 304 (MLAY…YNPL), 310 to 330 (IFYV…LSIL), 351 to 371 (PFLA…PPFA), 400 to 420 (IIAA…EPAT), and 434 to 454 (IGIS…NILF).

This sequence belongs to the complex I subunit 2 family. As to quaternary structure, NDH-1 is composed of 14 different subunits. Subunits NuoA, H, J, K, L, M, N constitute the membrane sector of the complex.

It localises to the cell inner membrane. The catalysed reaction is a quinone + NADH + 5 H(+)(in) = a quinol + NAD(+) + 4 H(+)(out). Functionally, NDH-1 shuttles electrons from NADH, via FMN and iron-sulfur (Fe-S) centers, to quinones in the respiratory chain. The immediate electron acceptor for the enzyme in this species is believed to be ubiquinone. Couples the redox reaction to proton translocation (for every two electrons transferred, four hydrogen ions are translocated across the cytoplasmic membrane), and thus conserves the redox energy in a proton gradient. The chain is NADH-quinone oxidoreductase subunit N 2 from Hydrogenobaculum sp. (strain Y04AAS1).